Reading from the N-terminus, the 78-residue chain is Translation initiation factor IF-1, chloroplastic (78 aa).

Positions 1–72 (MEKQNLIDME…TKGRITYRLR (72 aa)) constitute an S1-like domain.

It belongs to the IF-1 family. Component of the 30S ribosomal translation pre-initiation complex which assembles on the 30S ribosome in the order IF-2 and IF-3, IF-1 and N-formylmethionyl-tRNA(fMet); mRNA recruitment can occur at any time during PIC assembly.

It is found in the plastid. It localises to the chloroplast. Its function is as follows. One of the essential components for the initiation of protein synthesis. Stabilizes the binding of IF-2 and IF-3 on the 30S subunit to which N-formylmethionyl-tRNA(fMet) subsequently binds. Helps modulate mRNA selection, yielding the 30S pre-initiation complex (PIC). Upon addition of the 50S ribosomal subunit IF-1, IF-2 and IF-3 are released leaving the mature 70S translation initiation complex. The sequence is that of Translation initiation factor IF-1, chloroplastic from Anthoceros angustus (Hornwort).